Here is a 684-residue protein sequence, read N- to C-terminus: DNA ligase (684 aa).

NAD(+)-binding positions include 48–52, 97–98, and Glu129; these read DYEYD and SL. The N6-AMP-lysine intermediate role is filled by Lys131. NAD(+)-binding residues include Arg152, Glu189, Lys310, and Lys334. Zn(2+) contacts are provided by Cys429, Cys432, Cys447, and Cys452. The 76-residue stretch at 609–684 folds into the BRCT domain; it reads AQEGSLSGMS…ISWEELQAMI (76 aa).

This sequence belongs to the NAD-dependent DNA ligase family. LigA subfamily. The cofactor is Mg(2+). It depends on Mn(2+) as a cofactor.

The enzyme catalyses NAD(+) + (deoxyribonucleotide)n-3'-hydroxyl + 5'-phospho-(deoxyribonucleotide)m = (deoxyribonucleotide)n+m + AMP + beta-nicotinamide D-nucleotide.. Functionally, DNA ligase that catalyzes the formation of phosphodiester linkages between 5'-phosphoryl and 3'-hydroxyl groups in double-stranded DNA using NAD as a coenzyme and as the energy source for the reaction. It is essential for DNA replication and repair of damaged DNA. In Bdellovibrio bacteriovorus (strain ATCC 15356 / DSM 50701 / NCIMB 9529 / HD100), this protein is DNA ligase.